A 477-amino-acid chain; its full sequence is Glycogen synthase (477 aa).

Lys15 is a binding site for ADP-alpha-D-glucose.

It belongs to the glycosyltransferase 1 family. Bacterial/plant glycogen synthase subfamily.

It carries out the reaction [(1-&gt;4)-alpha-D-glucosyl](n) + ADP-alpha-D-glucose = [(1-&gt;4)-alpha-D-glucosyl](n+1) + ADP + H(+). Its pathway is glycan biosynthesis; glycogen biosynthesis. In terms of biological role, synthesizes alpha-1,4-glucan chains using ADP-glucose. The polypeptide is Glycogen synthase (Cronobacter sakazakii (strain ATCC BAA-894) (Enterobacter sakazakii)).